We begin with the raw amino-acid sequence, 95 residues long: MSDSLWHLYLLRTASGMLYTGITTDVARRLAQHQAGKGAKALRGKGELTLVFHCEAGDRSTALKLEYRVKQLSKQQKEKLVIDQPRLLTTLFLAS.

The GIY-YIG domain occupies 4 to 79; sequence SLWHLYLLRT…KQLSKQQKEK (76 aa).

This sequence belongs to the UPF0213 family.

The sequence is that of UPF0213 protein YPK_3712 from Yersinia pseudotuberculosis serotype O:3 (strain YPIII).